Here is a 627-residue protein sequence, read N- to C-terminus: Pescadillo homolog (627 aa).

In terms of domain architecture, BRCT spans 321–414 (RLRTLFKGLK…QLLPTNKYFI (94 aa)). Disordered stretches follow at residues 450 to 469 (HAQS…ETVD), 488 to 566 (YKKY…MVKP), and 595 to 627 (TIEA…KLGK). Phosphoserine occurs at positions 453 and 457. Acidic residues-rich tracts occupy residues 454 to 469 (DDDS…ETVD) and 497 to 521 (VNED…EELD). Positions 522–533 (EKTKRLQEEKQK) are enriched in basic and acidic residues. Residues 540–549 (KVHKVNKRQV) are compositionally biased toward basic residues. 2 stretches are compositionally biased toward basic and acidic residues: residues 550–559 (HKAEVDEHRL) and 595–615 (TIEA…RKEA). Positions 582–625 (KEKEEWLLRKKRRTIEASEKEARKTAKREARKEAAAAAAKASKL) form a coiled coil. Low complexity predominate over residues 616-627 (AAAAAKASKLGK).

The protein belongs to the pescadillo family.

The protein localises to the nucleus. It localises to the nucleolus. Its subcellular location is the nucleoplasm. Required for maturation of ribosomal RNAs and formation of the large ribosomal subunit. This is Pescadillo homolog from Drosophila simulans (Fruit fly).